The following is a 1021-amino-acid chain: Ribosome quality control complex subunit 2 (1021 aa).

Residues 348–388 (IEAQKLKKRAHDRLATAERRLESAKEDQARKLQSLQDAQAT) are a coiled coil. The tract at residues 457-484 (NPESVDNSDESSETSDDDLDDSDDDNKV) is disordered. Positions 462–480 (DNSDESSETSDDDLDDSDD) are enriched in acidic residues. Phosphoserine is present on S478. 2 coiled-coil regions span residues 507–546 (NARKQYELRREALIKETKTAEAASKALKSTQRKIEQDLKR) and 698–727 (DEKSSERRKARRLEMEVVETQGKVSELKME). Polar residues-rich tracts occupy residues 746-761 (YNEDTNNQSTPDTTGS) and 839-856 (ISSQIPSNDSSNVQTPTA). Disordered regions lie at residues 746–801 (YNED…TALE) and 832–905 (HAAR…VESF). Over residues 876-905 (DQSRNSEAENEKGLSTEQRDEKKHAKVESF) the composition is skewed to basic and acidic residues.

The protein belongs to the NEMF family. In terms of assembly, component of the ribosome quality control complex (RQC), composed of the E3 ubiquitin ligase rkr1/ltn1, rqc1 and mtr1/rqc2, as well as cdc48 and its ubiquitin-binding cofactors associated with the 60S ribosomal subunit. RQC2 binds to the 40S-binding surface of tRNAs.

It is found in the cytoplasm. Its function is as follows. Key component of the ribosome quality control complex (RQC), a ribosome-associated complex that mediates the extraction of incompletely synthesized nascent chains from stalled ribosomes as well as their ubiquitin-mediated proteasomal degradation. Thereby, frees 60S subunit ribosomes from the stalled translation complex and prevents the accumulation of nascent polypeptide chains that are potentially toxic for the cell. Within the RQC complex, mtr1/rqc2 specifically binds stalled 60S ribosomal subunits by recognizing an exposed, nascent chain-conjugated tRNA moiety and promotes the recruitment of rkr1/ltn1 to stalled 60S subunits. Following binding to stalled 60S ribosomal subunits, mtr1/rqc2 mediates CAT tailing by recruiting alanine- and threonine-charged tRNA to the A-site and directing the elongation of stalled nascent chains independently of mRNA or 40S subunits, leading to non-templated C-terminal Ala and Thr extensions (CAT tails). CAT tails promote the rkr1/ltn1-mediated ubiquitination of incompletely synthesized nascent polypeptides: CAT tailing facilitates rkr1/ltn1-dependent ubiquitination by exposing lysine residues that would otherwise remain buried in the ribosomal exit tunnel. Following ubiquitination, incompletely synthesized nascent polypeptides are recognized by CDC48 and degraded by the proteasome. CAT-tailed proteins tend to aggregate and sequester chaperones and can induce proteotoxic stress; their rkr1/ltn1-dependent ubiquitination and degradation is required to prevent proteotoxic stress. The polypeptide is Ribosome quality control complex subunit 2 (Schizosaccharomyces pombe (strain 972 / ATCC 24843) (Fission yeast)).